Here is a 404-residue protein sequence, read N- to C-terminus: BRCA1-A complex subunit Abraxas 1 (404 aa).

In terms of domain architecture, MPN spans 7-161 (YIRVSGFVLG…YAVYRSHGSQ (155 aa)). Positions 219 to 268 (MNNSLQGELKMACKKVEESERLVEKLLADVSDLRRMVNERKQELREISAD) form a coiled coil. The disordered stretch occupies residues 339–404 (GRLGRGGGTS…NLDVSNSPVF (66 aa)). Polar residues predominate over residues 391 to 404 (RNGNNLDVSNSPVF). The residue at position 401 (S401) is a Phosphoserine. The pSXXF motif motif lies at 401-404 (SPVF).

This sequence belongs to the FAM175 family. Abraxas subfamily. Component of the BRCA1-A complex. Component of the BRISC complex. Homodimer. Interacts directly (when phosphorylated at Ser-401) with brca1. The phosphorylated homodimer can interact directly with two brca1 chains, giving rise to a heterotetramer. Phosphorylation of Ser-401 of the pSXXF motif by ATM or ATR constitutes a specific recognition motif for the BRCT domain of BRCA1.

The protein localises to the nucleus. In terms of biological role, involved in DNA damage response and double-strand break (DSB) repair. Component of the BRCA1-A complex, acting as a central scaffold protein that assembles the various components of the complex and mediates the recruitment of brca1. The BRCA1-A complex specifically recognizes 'Lys-63'-linked ubiquitinated histones H2A and H2AX at DNA lesion sites, leading to target the brca1-bard1 heterodimer to sites of DNA damage at DSBs. This complex also possesses deubiquitinase activity that specifically removes 'Lys-63'-linked ubiquitin on histones H2A and H2AX. The protein is BRCA1-A complex subunit Abraxas 1 of Salmo salar (Atlantic salmon).